We begin with the raw amino-acid sequence, 74 residues long: Large ribosomal subunit protein bL27c (74 aa).

It belongs to the bacterial ribosomal protein bL27 family.

It is found in the plastid. Its subcellular location is the chloroplast. The protein is Large ribosomal subunit protein bL27c (rpl27) of Calyptrosphaera sphaeroidea.